The following is a 929-amino-acid chain: Patatin-like phospholipase domain-containing protein CNE02340 (929 aa).

The segment at 37–85 (QPLDGDSSPLSPRSFSLPPESPQLSTASVKAPPPTWKYGPDNGTLRSGR) is disordered. Residues 43–54 (SSPLSPRSFSLP) show a composition bias toward low complexity. A helical membrane pass occupies residues 126–146 (WPLLFFIFFIIYLEFSAYVIT). The PNPLA domain maps to 301 to 493 (LCLSGGASFG…REDIPLGSLH (193 aa)). The GXSXG signature appears at 332–336 (GTSAG). Ser334 (nucleophile) is an active-site residue. Asp480 acts as the Proton acceptor in catalysis. 3 disordered regions span residues 644–765 (ALSH…NFGD), 778–806 (LSSP…QRFR), and 818–929 (VSES…QDGA). Composition is skewed to polar residues over residues 652–664 (NDPA…TNPE) and 745–764 (PTHS…SNFG). Low complexity predominate over residues 779–806 (SSPFRSIRSNTSSSSNNVQSPSSSQRFR). A compositionally biased stretch (basic and acidic residues) spans 856 to 878 (VESHSDRSEDEMLHSGANVKEEY).

It belongs to the PLPL family.

The protein localises to the membrane. Functionally, probable lipid hydrolase. In Cryptococcus neoformans var. neoformans serotype D (strain JEC21 / ATCC MYA-565) (Filobasidiella neoformans), this protein is Patatin-like phospholipase domain-containing protein CNE02340.